The chain runs to 621 residues: Chaperone protein DnaK (621 aa).

Threonine 175 carries the post-translational modification Phosphothreonine; by autocatalysis. Residues 499–516 (EAHEADDKKRKEDAETRN) are compositionally biased toward basic and acidic residues. Disordered regions lie at residues 499-520 (EAHEADDKKRKEDAETRNNAEN) and 583-621 (AQQGAEGAAGAADSGSANNGGDDDVVDAEVVDDDDKDNK). A compositionally biased stretch (low complexity) spans 583 to 602 (AQQGAEGAAGAADSGSANNG). Positions 603–621 (GDDDVVDAEVVDDDDKDNK) are enriched in acidic residues.

Belongs to the heat shock protein 70 family.

Its function is as follows. Acts as a chaperone. The chain is Chaperone protein DnaK from Bifidobacterium animalis subsp. lactis (strain AD011).